The following is a 198-amino-acid chain: Proteasome subunit beta type-2 (198 aa).

Belongs to the peptidase T1B family. In terms of assembly, the 26S proteasome consists of a 20S proteasome core and two 19S regulatory subunits. The 20S proteasome core is composed of 28 subunits that are arranged in four stacked rings, resulting in a barrel-shaped structure. The two end rings are each formed by seven alpha subunits, and the two central rings are each formed by seven beta subunits. The catalytic chamber with the active sites is on the inside of the barrel.

It is found in the cytoplasm. It localises to the nucleus. In terms of biological role, non-catalytic component of the proteasome, a multicatalytic proteinase complex which is characterized by its ability to cleave peptides with Arg, Phe, Tyr, Leu, and Glu adjacent to the leaving group at neutral or slightly basic pH. The proteasome has an ATP-dependent proteolytic activity. The polypeptide is Proteasome subunit beta type-2 (psmB2) (Dictyostelium discoideum (Social amoeba)).